Reading from the N-terminus, the 643-residue chain is Very long-chain fatty acid transport protein (643 aa).

Residues 1 to 15 lie on the Cytoplasmic side of the membrane; that stretch reads MACMHQAQLYNDLEE. A helical membrane pass occupies residues 16 to 36; that stretch reads LLTGPSVPIVAGAAGAAALTA. The Extracellular segment spans residues 37–138; sequence YINAKYHIAH…AIDGGNSAEH (102 aa). A helical membrane pass occupies residues 139–159; sequence LMLWLALDAIGAATSFLNWNL. The Cytoplasmic portion of the chain corresponds to 160-249; sequence TGAGLIHCIK…TGLPKGVFIS (90 aa). Residue 235-246 coordinates ATP; sequence YTSGTTGLPKGV. An intramembrane segment occupies 250-318; it reads TGRELRTDWS…FWPEVVASEA (69 aa). The Cytoplasmic segment spans residues 319-643; sequence NIIQYVGELG…QGIVDKRIRL (325 aa). The short motif at 477-525 is the FACS element; sequence DLWFKSGDMLRQDAEGRVYFVDRLGDTFRWKSENVSTNEVADVMGTFPQ.

This sequence belongs to the ATP-dependent AMP-binding enzyme family.

The protein resides in the lipid droplet. It localises to the cell membrane. Its subcellular location is the peroxisome membrane. The protein localises to the peroxisome. It carries out the reaction a very long-chain fatty acid + ATP + CoA = a very long-chain fatty acyl-CoA + AMP + diphosphate. Acyl-CoA synthetase required for both the import of long chain fatty acids (LCFAs) (C14-C18) and the activation very long chain fatty acids (VLCFAs) (C20-C26) by esterification of the fatty acids into metabolically active CoA-thioesters for subsequent degradation or incorporation into phospholipids. The transport and fatty acyl-CoA synthetase activities are genetically separable and are thus independent activities. Esterifies VLCFAs in the peroxisome matrix. The VLCFAs are actively transported into peroxisomes by a PXA1-PXA2 heterodimeric transporter in the peroxisomal membrane. The chain is Very long-chain fatty acid transport protein (FAT1) from Cochliobolus heterostrophus (Southern corn leaf blight fungus).